We begin with the raw amino-acid sequence, 572 residues long: Sulfate adenylyltransferase (572 aa).

The interval 1–169 (MANAPHGGVL…IEAVNKLNHY (169 aa)) is N-terminal. Residues 170–393 (DYVALRYTPA…LRESNPPRAT (224 aa)) are catalytic. Gln197 provides a ligand contact to sulfate. Residues 197–200 (QTRN) and 291–294 (GRDH) contribute to the ATP site. Active-site residues include Thr198, Arg199, and Asn200. Arg199 serves as a coordination point for sulfate. Ala295 is a sulfate binding site. Position 333 (Val333) interacts with ATP. The allosteric regulation domain; adenylyl-sulfate kinase-like stretch occupies residues 394-572 (QGFTIFLTGY…LESQGFLERQ (179 aa)). 3'-phosphoadenylyl sulfate contacts are provided by residues 433-436 (DTVR), Arg450, 476-477 (IA), and Arg514.

This sequence in the N-terminal section; belongs to the sulfate adenylyltransferase family. In the C-terminal section; belongs to the APS kinase family. Homohexamer. Dimer of trimers.

The protein localises to the cytoplasm. The enzyme catalyses sulfate + ATP + H(+) = adenosine 5'-phosphosulfate + diphosphate. It functions in the pathway sulfur metabolism; hydrogen sulfide biosynthesis; sulfite from sulfate: step 1/3. With respect to regulation, allosterically inhibited by 3'-phosphoadenosine 5'-phosphosulfate (PAPS). Functionally, catalyzes the first intracellular reaction of sulfate assimilation, forming adenosine-5'-phosphosulfate (APS) from inorganic sulfate and ATP. Plays an important role in sulfate activation as a component of the biosynthesis pathway of sulfur-containing amino acids. This is Sulfate adenylyltransferase from Penicillium chrysogenum (Penicillium notatum).